The sequence spans 66 residues: Small ribosomal subunit protein bS21B (66 aa).

The segment at 38-66 (YVKPTQKRKIAKKAAISKAKKEARRSYSY) is disordered.

The protein belongs to the bacterial ribosomal protein bS21 family.

The protein is Small ribosomal subunit protein bS21B of Francisella tularensis subsp. tularensis (strain SCHU S4 / Schu 4).